The following is a 640-amino-acid chain: Fructose-1,6-bisphosphatase class 3 (640 aa).

The protein belongs to the FBPase class 3 family. Mn(2+) serves as cofactor.

The catalysed reaction is beta-D-fructose 1,6-bisphosphate + H2O = beta-D-fructose 6-phosphate + phosphate. The protein operates within carbohydrate biosynthesis; gluconeogenesis. In Lactococcus lactis subsp. cremoris (strain MG1363), this protein is Fructose-1,6-bisphosphatase class 3.